A 2548-amino-acid polypeptide reads, in one-letter code: Unconventional myosin-IXa (2548 aa).

Positions 14 to 112 (NEHTLRIYPG…YRFLLREKNL (99 aa)) constitute a Ras-associating domain. Positions 146-1016 (KDFDDLCSLP…ERQHLQDLLH (871 aa)) constitute a Myosin motor domain. A helical transmembrane segment spans residues 175–195 (IYTYVGSILIVINPFKFLPIY). 239–246 (GESGSGKT) is a binding site for ATP. Position 755 is a phosphoserine (Ser755). The tract at residues 898–920 (LSKLMETLGQAEPYFVKCIRSNA) is actin-binding. IQ domains are found at residues 1021-1041 (RRII…HFLH), 1042-1071 (LRQA…QKDA), 1074-1103 (MASA…AAIV), 1115-1144 (RHMA…KIIL), and 1138-1167 (QRKK…QRLR). The tract at residues 1021–1162 (RRIILLQRWF…RARQRFKALK (142 aa)) is neck or regulatory domain. The interval 1163–2511 (EQRLRETKPE…LKNVKNSPQK (1349 aa)) is tail. Residues 1223 to 1236 (SVDCLKESPNKQQE) are compositionally biased toward basic and acidic residues. Residues 1223–1250 (SVDCLKESPNKQQERAQSQSGVDLQEDV) form a disordered region. Phosphoserine is present on residues Ser1242 and Ser1258. Residues 1264–1291 (QKKVGRAKRESRRMRELEQAIFSLELLK) are a coiled coil. Phosphoserine occurs at positions 1299 and 1317. The segment at 1299–1386 (SPSEDRRWST…SNETSSAEHL (88 aa)) is disordered. 2 stretches are compositionally biased toward low complexity: residues 1324 to 1337 (SESS…LSYE) and 1356 to 1366 (FPSPKISSSPK). Ser1364 carries the phosphoserine modification. Residues 1372–1381 (NALSASNETS) are compositionally biased toward polar residues. Positions 1486-1532 (VLKKLEKLNTEKEERQKQLQQQNEKEMMEQIRQQTDILEKERKAFKT) form a coiled coil. Residues 1804–1836 (YHPTPPLSPELPGSCRKEFKENKEPSPKAKRKR) form a disordered region. Over residues 1818-1830 (CRKEFKENKEPSP) the composition is skewed to basic and acidic residues. At Ser1948 the chain carries Phosphoserine. Phorbol-ester/DAG-type zinc fingers lie at residues 1999–2048 (GHIF…TAKC) and 2068–2119 (LTSE…DAES). Positions 2063 to 2251 (VELSRLTSED…LIVVEQMNKY (189 aa)) constitute a Rho-GAP domain. The residue at position 2294 (Ser2294) is a Phosphoserine. A coiled-coil region spans residues 2315–2358 (AAMETDITEQQQAAMQQEERVLTEQIENLQKEKEELTFEMLVLE). 2 disordered regions span residues 2359 to 2383 (PRAS…ENLN) and 2401 to 2424 (SSLK…KQQD). The residue at position 2464 (Ser2464) is a Phosphoserine. A disordered region spans residues 2490 to 2531 (RGTFNPEKGKQKLKNVKNSPQKTKETPEGTVMSGRRKTVDPD).

Belongs to the TRAFAC class myosin-kinesin ATPase superfamily. Myosin family. Post-translationally, phosphorylated by ALPK1 following monosodium urate monohydrate (MSU)-induced inflammation. Found to be expressed in testis and placenta and at lower levels in all the examined tissues with the exception of liver. Isoform 5: Found in leukocytes but not in brain, retina or testis.

It localises to the membrane. The protein localises to the cytoplasm. The protein resides in the synapse. Its subcellular location is the cell projection. It is found in the growth cone. Myosins are actin-based motor molecules with ATPase activity. Unconventional myosins serve in intracellular movements. Regulates Rho by stimulating it's GTPase activity in neurons. Required for the regulation of neurite branching and motor neuron axon guidance. The protein is Unconventional myosin-IXa (MYO9A) of Homo sapiens (Human).